Consider the following 353-residue polypeptide: MRVLILSAFIACATAAPSAPVFGTLTPLTVPYIANIPTISPGDIQAAAIDAKVKVEDALRAAADRNQELLEQAIENQNEKVIEVNDLLKEKSQEAFWSTEDTKWQALTALQTAEAKIDGTLASNADLLGKAVLNGVVVSPVVSRIYSNVIQGVAAADCETPVLKAAEAPEGNKDEGNKDSVQVESSATESESDKAAAGFVRNLEAAQAAAQAQLLSETSAPTADTRAVIAASSEASAAAAPAASLSEASAQSASETGVSAASLSQSPVATPLSAAPLAPLPSSSVPLAGVPASAIAAAPLTAASLIASPLTLPTLNLEQQWVTGPVFVQPGLKAISPISLQTPFVPTLLKTPC.

Residues 1–15 (MRVLILSAFIACATA) form the signal peptide. A disordered region spans residues 166–195 (AEAPEGNKDEGNKDSVQVESSATESESDKA). Residues 179–189 (DSVQVESSATE) are compositionally biased toward polar residues.

Its function is as follows. Component of the cuticle of the pupa of Galleria mellonella. The chain is Pupal cuticle protein PCP52 (PCP52) from Galleria mellonella (Greater wax moth).